Here is a 242-residue protein sequence, read N- to C-terminus: ATP synthase subunit a (242 aa).

6 helical membrane passes run 31-51 (IYML…FYNW), 84-104 (FIPL…LGMT), 114-134 (IIVT…VGFV), 140-160 (FLTL…MIVI), 189-209 (VIAS…IPLM), and 210-230 (VILI…FTIL).

The protein belongs to the ATPase A chain family. F-type ATPases have 2 components, CF(1) - the catalytic core - and CF(0) - the membrane proton channel. CF(1) has five subunits: alpha(3), beta(3), gamma(1), delta(1), epsilon(1). CF(0) has three main subunits: a(1), b(2) and c(9-12). The alpha and beta chains form an alternating ring which encloses part of the gamma chain. CF(1) is attached to CF(0) by a central stalk formed by the gamma and epsilon chains, while a peripheral stalk is formed by the delta and b chains.

The protein resides in the cell inner membrane. Functionally, key component of the proton channel; it plays a direct role in the translocation of protons across the membrane. This Rickettsia canadensis (strain McKiel) protein is ATP synthase subunit a.